Reading from the N-terminus, the 382-residue chain is RNA exonuclease 3 (382 aa).

The Exonuclease domain occupies 223 to 369; it reads VLALDCEMAY…EDAIAAMDVV (147 aa).

Belongs to the REXO1/REXO3 family.

It is found in the cytoplasm. The protein localises to the nucleus. Functionally, 3' to 5' exoribonuclease required for proper 3' end maturation of MRP RNA and of the U5L snRNA. The polypeptide is RNA exonuclease 3 (REX3) (Eremothecium gossypii (strain ATCC 10895 / CBS 109.51 / FGSC 9923 / NRRL Y-1056) (Yeast)).